The following is a 147-amino-acid chain: UPF0735 ACT domain-containing protein YszB (147 aa).

Residues 70–145 (TLFFHLEDRS…FVEKVEILGS (76 aa)) enclose the ACT domain.

This sequence belongs to the UPF0735 family.

The polypeptide is UPF0735 ACT domain-containing protein YszB (yszB) (Bacillus subtilis (strain 168)).